The primary structure comprises 422 residues: Regulator of sigma-W protease RasP (422 aa).

A run of 4 helical transmembrane segments spans residues Val-6–Leu-26, Ile-175–Leu-195, Ile-346–Leu-366, and Glu-394–Trp-414. His-20 serves as a coordination point for Zn(2+). The active site involves Glu-21. A Zn(2+)-binding site is contributed by His-24. Residues Ala-186 to Ala-271 form the PDZ domain.

The protein belongs to the peptidase M50B family. Zn(2+) is required as a cofactor.

It localises to the cell membrane. In terms of biological role, is responsible for site-2 cleavage of the RsiW anti-sigma factor. This results, after a third proteolytic step catalyzed by the ClpXP protease, in the release of SigW and the transcription activation of the genes under the control of the sigma-W factor. Can also cleave liberated signal peptides of PenP and Mpr, probably within in the cell membrane. The polypeptide is Regulator of sigma-W protease RasP (Bacillus subtilis (strain 168)).